We begin with the raw amino-acid sequence, 161 residues long: HMG1/2-like protein (161 aa).

Disordered regions lie at residues 1-46, 60-91, and 113-161; these read MKGA…KRAP, FKQKNPKNKSVAAVGKAAGERWKSLSESEKAP, and GESA…DDDE. Basic and acidic residues-rich tracts occupy residues 10–27 and 77–89; these read AKADAKLAVKSKGAEKPA and AGERWKSLSESEK. The segment at residues 42–111 is a DNA-binding region (HMG box); sequence PKRAPSAFFV…EYNKAIAAYN (70 aa). Positions 114–123 are enriched in low complexity; sequence ESAAAAAPKK. Acidic residues predominate over residues 145 to 161; the sequence is NDDDDDEGSDEDEDDDE.

Belongs to the HMGB family.

Its subcellular location is the nucleus. The protein is HMG1/2-like protein of Triticum aestivum (Wheat).